Consider the following 396-residue polypeptide: Elongation factor Tu 2 (396 aa).

A tr-type G domain is found at 10 to 206 (KPHINVGTIG…AMDAHIPQPE (197 aa)). Residues 19 to 26 (GHVDHGKT) are G1. 19-26 (GHVDHGKT) contacts GTP. Thr-26 provides a ligand contact to Mg(2+). Positions 60–64 (GITIA) are G2. Residues 81-84 (DCPG) form a G3 region. Residues 81–85 (DCPGH) and 136–139 (NKAD) each bind GTP. Positions 136-139 (NKAD) are G4. The interval 174–176 (SAL) is G5.

The protein belongs to the TRAFAC class translation factor GTPase superfamily. Classic translation factor GTPase family. EF-Tu/EF-1A subfamily. As to quaternary structure, monomer.

The protein resides in the cytoplasm. The enzyme catalyses GTP + H2O = GDP + phosphate + H(+). Its function is as follows. GTP hydrolase that promotes the GTP-dependent binding of aminoacyl-tRNA to the A-site of ribosomes during protein biosynthesis. This Halorhodospira halophila (strain DSM 244 / SL1) (Ectothiorhodospira halophila (strain DSM 244 / SL1)) protein is Elongation factor Tu 2.